A 343-amino-acid chain; its full sequence is Methionine import ATP-binding protein MetN (343 aa).

In terms of domain architecture, ABC transporter spans 2–241 (IKLSNITKVF…PKTPLAQKFI (240 aa)). 38 to 45 (GASGAGKS) contributes to the ATP binding site.

The protein belongs to the ABC transporter superfamily. Methionine importer (TC 3.A.1.24) family. In terms of assembly, the complex is composed of two ATP-binding proteins (MetN), two transmembrane proteins (MetI) and a solute-binding protein (MetQ).

Its subcellular location is the cell inner membrane. The catalysed reaction is L-methionine(out) + ATP + H2O = L-methionine(in) + ADP + phosphate + H(+). It carries out the reaction D-methionine(out) + ATP + H2O = D-methionine(in) + ADP + phosphate + H(+). Functionally, part of the ABC transporter complex MetNIQ involved in methionine import. Responsible for energy coupling to the transport system. This is Methionine import ATP-binding protein MetN from Shigella flexneri serotype 5b (strain 8401).